Here is a 227-residue protein sequence, read N- to C-terminus: Cytochrome c oxidase subunit 2 (227 aa).

The Mitochondrial intermembrane portion of the chain corresponds to 1 to 14 (MAHAAQVGLQDATS). A helical transmembrane segment spans residues 15 to 45 (PIMEELITFHDHALMIIFLICFLVLYALFLT). Residues 46–59 (LTTKLTNTNISDAQ) lie on the Mitochondrial matrix side of the membrane. A helical transmembrane segment spans residues 60–87 (EMETVWTILPAIILVLIALPSLRILYMT). Residues 88–227 (DEVNDPSLTI…IFEMGPVFTL (140 aa)) are Mitochondrial intermembrane-facing. Cu cation-binding residues include H161, C196, E198, C200, H204, and M207. E198 lines the Mg(2+) pocket.

It belongs to the cytochrome c oxidase subunit 2 family. Component of the cytochrome c oxidase (complex IV, CIV), a multisubunit enzyme composed of 14 subunits. The complex is composed of a catalytic core of 3 subunits MT-CO1, MT-CO2 and MT-CO3, encoded in the mitochondrial DNA, and 11 supernumerary subunits COX4I1 (or COX4I2), COX5A, COX5B, COX6A1 (or COX6A2), COX6B1 (or COX6B2), COX6C, COX7A2 (or COX7A1), COX7B, COX7C, COX8A and NDUFA4, which are encoded in the nuclear genome. The complex exists as a monomer or a dimer and forms supercomplexes (SCs) in the inner mitochondrial membrane with NADH-ubiquinone oxidoreductase (complex I, CI) and ubiquinol-cytochrome c oxidoreductase (cytochrome b-c1 complex, complex III, CIII), resulting in different assemblies (supercomplex SCI(1)III(2)IV(1) and megacomplex MCI(2)III(2)IV(2)). Found in a complex with TMEM177, COA6, COX18, COX20, SCO1 and SCO2. Interacts with TMEM177 in a COX20-dependent manner. Interacts with COX20. Interacts with COX16. Cu cation is required as a cofactor.

It is found in the mitochondrion inner membrane. The enzyme catalyses 4 Fe(II)-[cytochrome c] + O2 + 8 H(+)(in) = 4 Fe(III)-[cytochrome c] + 2 H2O + 4 H(+)(out). Component of the cytochrome c oxidase, the last enzyme in the mitochondrial electron transport chain which drives oxidative phosphorylation. The respiratory chain contains 3 multisubunit complexes succinate dehydrogenase (complex II, CII), ubiquinol-cytochrome c oxidoreductase (cytochrome b-c1 complex, complex III, CIII) and cytochrome c oxidase (complex IV, CIV), that cooperate to transfer electrons derived from NADH and succinate to molecular oxygen, creating an electrochemical gradient over the inner membrane that drives transmembrane transport and the ATP synthase. Cytochrome c oxidase is the component of the respiratory chain that catalyzes the reduction of oxygen to water. Electrons originating from reduced cytochrome c in the intermembrane space (IMS) are transferred via the dinuclear copper A center (CU(A)) of subunit 2 and heme A of subunit 1 to the active site in subunit 1, a binuclear center (BNC) formed by heme A3 and copper B (CU(B)). The BNC reduces molecular oxygen to 2 water molecules using 4 electrons from cytochrome c in the IMS and 4 protons from the mitochondrial matrix. In Homo sapiens (Human), this protein is Cytochrome c oxidase subunit 2 (MT-CO2).